Here is a 484-residue protein sequence, read N- to C-terminus: Dynein regulatory complex subunit 2 (484 aa).

Coiled coils occupy residues 92–160 (VDCK…RKTI) and 374–403 (KEQE…GMEN).

It belongs to the DRC2 family. In terms of assembly, component of the nexin-dynein regulatory complex (N-DRC). Interacts with DRC1.

The protein resides in the cytoplasm. The protein localises to the cytoskeleton. It is found in the flagellum basal body. It localises to the cell projection. Its subcellular location is the cilium. The protein resides in the flagellum. The protein localises to the flagellum axoneme. In terms of biological role, component of the nexin-dynein regulatory complex (N-DRC), a key regulator of ciliary/flagellar motility which maintains the alignment and integrity of the distal axoneme and regulates microtubule sliding in motile axonemes. Plays a critical role in the assembly of N-DRC and also stabilizes the assembly of multiple inner dynein arms and radial spokes. Coassembles with DRC1 to form a central scaffold needed for assembly of the N-DRC and its attachment to the outer doublet microtubules. In Macaca fascicularis (Crab-eating macaque), this protein is Dynein regulatory complex subunit 2 (CCDC65).